Here is a 318-residue protein sequence, read N- to C-terminus: Ribonuclease Z (318 aa).

Residues H63, H65, D67, H68, H142, D210, and H268 each contribute to the Zn(2+) site. Catalysis depends on D67, which acts as the Proton acceptor.

It belongs to the RNase Z family. As to quaternary structure, homodimer. Requires Zn(2+) as cofactor.

It carries out the reaction Endonucleolytic cleavage of RNA, removing extra 3' nucleotides from tRNA precursor, generating 3' termini of tRNAs. A 3'-hydroxy group is left at the tRNA terminus and a 5'-phosphoryl group is left at the trailer molecule.. Functionally, zinc phosphodiesterase, which displays some tRNA 3'-processing endonuclease activity. Probably involved in tRNA maturation, by removing a 3'-trailer from precursor tRNA. In Thermobifida fusca (strain YX), this protein is Ribonuclease Z.